The chain runs to 985 residues: Phosphoenolpyruvate carboxylase (985 aa).

The span at 1-17 shows a compositional bias: low complexity; sequence MTQSAARRASSRATPAR. Residues 1–55 are disordered; it reads MTQSAARRASSRATPARKTPPAPASQTPAPSPGGTAGTALGPTSRRSSGSAAAKD. Active-site residues include His193 and Lys634.

Belongs to the PEPCase type 1 family. Mg(2+) serves as cofactor.

The enzyme catalyses oxaloacetate + phosphate = phosphoenolpyruvate + hydrogencarbonate. Functionally, forms oxaloacetate, a four-carbon dicarboxylic acid source for the tricarboxylic acid cycle. This is Phosphoenolpyruvate carboxylase from Ralstonia nicotianae (strain ATCC BAA-1114 / GMI1000) (Ralstonia solanacearum).